The chain runs to 89 residues: Small ribosomal subunit protein uS14 (89 aa).

The protein belongs to the universal ribosomal protein uS14 family. As to quaternary structure, part of the 30S ribosomal subunit. Contacts proteins S3 and S10.

Functionally, binds 16S rRNA, required for the assembly of 30S particles and may also be responsible for determining the conformation of the 16S rRNA at the A site. This is Small ribosomal subunit protein uS14 from Deinococcus radiodurans (strain ATCC 13939 / DSM 20539 / JCM 16871 / CCUG 27074 / LMG 4051 / NBRC 15346 / NCIMB 9279 / VKM B-1422 / R1).